The following is a 77-amino-acid chain: Large ribosomal subunit protein bL28 (77 aa).

Belongs to the bacterial ribosomal protein bL28 family.

In Karelsulcia muelleri (strain GWSS) (Sulcia muelleri), this protein is Large ribosomal subunit protein bL28.